The sequence spans 227 residues: ATP-dependent Clp protease proteolytic subunit (227 aa).

The active-site Nucleophile is the serine 120. Residue histidine 145 is part of the active site.

This sequence belongs to the peptidase S14 family. As to quaternary structure, fourteen ClpP subunits assemble into 2 heptameric rings which stack back to back to give a disk-like structure with a central cavity, resembling the structure of eukaryotic proteasomes.

Its subcellular location is the cytoplasm. The enzyme catalyses Hydrolysis of proteins to small peptides in the presence of ATP and magnesium. alpha-casein is the usual test substrate. In the absence of ATP, only oligopeptides shorter than five residues are hydrolyzed (such as succinyl-Leu-Tyr-|-NHMec, and Leu-Tyr-Leu-|-Tyr-Trp, in which cleavage of the -Tyr-|-Leu- and -Tyr-|-Trp bonds also occurs).. In terms of biological role, cleaves peptides in various proteins in a process that requires ATP hydrolysis. Has a chymotrypsin-like activity. Plays a major role in the degradation of misfolded proteins. This Rickettsia bellii (strain RML369-C) protein is ATP-dependent Clp protease proteolytic subunit.